The chain runs to 71 residues: Protein translocase subunit SecE (71 aa).

Residues V43–T63 form a helical membrane-spanning segment.

It belongs to the SecE/SEC61-gamma family. As to quaternary structure, component of the Sec protein translocase complex. Heterotrimer consisting of SecY (alpha), SecG (beta) and SecE (gamma) subunits. The heterotrimers can form oligomers, although 1 heterotrimer is thought to be able to translocate proteins. Interacts with the ribosome. May interact with SecDF, and other proteins may be involved.

The protein localises to the cell membrane. Functionally, essential subunit of the Sec protein translocation channel SecYEG. Clamps together the 2 halves of SecY. May contact the channel plug during translocation. The sequence is that of Protein translocase subunit SecE from Methanosarcina acetivorans (strain ATCC 35395 / DSM 2834 / JCM 12185 / C2A).